We begin with the raw amino-acid sequence, 297 residues long: Aspartate carbamoyltransferase catalytic subunit (297 aa).

Carbamoyl phosphate contacts are provided by Arg49 and Thr50. Lys77 is a binding site for L-aspartate. Positions 99, 129, and 132 each coordinate carbamoyl phosphate. Residues Arg162 and Arg215 each coordinate L-aspartate. Gly256 and Pro257 together coordinate carbamoyl phosphate.

It belongs to the aspartate/ornithine carbamoyltransferase superfamily. ATCase family. Heterododecamer (2C3:3R2) of six catalytic PyrB chains organized as two trimers (C3), and six regulatory PyrI chains organized as three dimers (R2).

It catalyses the reaction carbamoyl phosphate + L-aspartate = N-carbamoyl-L-aspartate + phosphate + H(+). It functions in the pathway pyrimidine metabolism; UMP biosynthesis via de novo pathway; (S)-dihydroorotate from bicarbonate: step 2/3. Its function is as follows. Catalyzes the condensation of carbamoyl phosphate and aspartate to form carbamoyl aspartate and inorganic phosphate, the committed step in the de novo pyrimidine nucleotide biosynthesis pathway. In Legionella pneumophila (strain Lens), this protein is Aspartate carbamoyltransferase catalytic subunit.